The chain runs to 374 residues: Alcohol dehydrogenase 1 (374 aa).

The residue at position 1 (Ser-1) is an N-acetylserine. Zn(2+) is bound by residues Cys-46, His-67, Cys-97, Cys-100, Cys-103, Cys-111, and Cys-174. NAD(+)-binding positions include 199–204 (GLGGVG), Asp-223, Lys-228, 292–294 (VGV), and Arg-369.

Belongs to the zinc-containing alcohol dehydrogenase family. Class-I subfamily. In terms of assembly, homodimer. The cofactor is Zn(2+).

The protein resides in the cytoplasm. The catalysed reaction is a primary alcohol + NAD(+) = an aldehyde + NADH + H(+). It catalyses the reaction a secondary alcohol + NAD(+) = a ketone + NADH + H(+). This chain is Alcohol dehydrogenase 1 (ADH1), found in Struthio camelus (Common ostrich).